Consider the following 741-residue polypeptide: Moderate conductance mechanosensitive channel YbiO (741 aa).

The signal sequence occupies residues 1-18 (MRWILFILFCLLGAPAHA). Positions 22 to 42 (PGVTTTTTTDSTTEPAPEPDI) are disordered. A compositionally biased stretch (low complexity) spans 25 to 34 (TTTTTTDSTT). 11 helical membrane passes run 143-163 (MLAV…LPLY), 185-205 (AMII…LFVG), 225-245 (LFLN…LIFC), 268-288 (LSWL…IISN), 294-314 (IGAL…LYLI), 343-363 (FALV…FFSL), 372-392 (FMMG…FVSG), 432-452 (ILTV…FDFW), 466-486 (ILIR…VLAS), 509-529 (LLTL…IMIV), and 533-553 (IGVN…AISF).

Belongs to the MscS (TC 1.A.23) family. As to quaternary structure, homoheptamer.

It localises to the cell inner membrane. Functionally, mechanosensitive channel that protects cells against hypoosmotic stress when highly overexpressed. The chain is Moderate conductance mechanosensitive channel YbiO (ybiO) from Escherichia coli (strain K12).